The primary structure comprises 20 residues: Short cationic peptide-4a (20 aa).

Position 20 is a glutamic acid 1-amide (Glu20).

In terms of tissue distribution, expressed by the venom gland.

It localises to the secreted. This Cupiennius salei (American wandering spider) protein is Short cationic peptide-4a.